The following is a 708-amino-acid chain: MAETLEFNDIFQEVKGSMNDGRLRLSRQGIIFKNSKTGKVDNIQAGELTEGIWRRVALGHGLKLLTKNGHVYKYDGFRESEFEKLSDFFKTHYRLELMEKDLCVKGWNWGTVKFGGQLLSFDIGDQPVFEIPLSNVSQCTTGKNEVTLEFHQNDDAEVSLMEVRFYVPPTQEDGVDPVEAFAQNVLSKADVIQATGDAICIFRELQCLTPRGRYDIRIYPTFLHLHGKTFDYKIPYTTVLRLFLLPHKDQRQMFFVISLDPPIKQGQTRYHFLILLFSKDEDISLTLNMNEEEVEKRFEGRLTKNMSGSLYEMVSRVMKALVNRKITVPGNFQGHSGAQCITCSYKASSGLLYPLERGFIYVHKPPVHIRFDEISFVNFARGTTTTRSFDFEIETKQGTQYTFSSIEREEYGKLFDFVNAKKLNIKNRGLKEGINPGYDDYADSDEDQHDAYLERMKEEGKIREENANDSSDDSGEETDESFNPGEEEEDVAEEFDSNASASSSSNEGDSDREEKKREQLKRAKMAKDRKSRRKSSEAKKGKDPNAPKRPMSAYMLWLNASREKIKSDHPGISITDLSKKAGEIWKGMSKEKKEEWDRKAEDARREYEKAMKEYEGGRGDSSKRDKSKKKKKVKAKMEKKSTPSRGSSSKSSSRQLSDSFKSKEFVSSDESSSGENKSKKKRRRSEDSEEELASTPPSSEDSASGSDE.

A2 carries the post-translational modification N-acetylalanine. K90 is covalently cross-linked (Glycyl lysine isopeptide (Lys-Gly) (interchain with G-Cter in SUMO2)). Position 170 is a phosphothreonine (T170). The residue at position 233 (K233) is an N6-acetyllysine. Residues K296 and K364 each participate in a glycyl lysine isopeptide (Lys-Gly) (interchain with G-Cter in SUMO2) cross-link. K413 bears the N6-acetyllysine mark. Y441 bears the Phosphotyrosine mark. S444 is modified (phosphoserine). Y452 carries the phosphotyrosine modification. The segment at 458-708 (EEGKIREENA…SEDSASGSDE (251 aa)) is disordered. The segment covering 470–496 (SSDDSGEETDESFNPGEEEEDVAEEFD) has biased composition (acidic residues). Residue S471 is modified to Phosphoserine. A compositionally biased stretch (low complexity) spans 497–507 (SNASASSSSNE). Position 510 is a phosphoserine; by CK2 (S510). 2 stretches are compositionally biased toward basic and acidic residues: residues 512–546 (REEKKREQLKRAKMAKDRKSRRKSSEAKKGKDPNA) and 577–624 (LSKK…SSKR). K542 is subject to N6-acetyllysine. The segment at residues 547-615 (PKRPMSAYML…EYEKAMKEYE (69 aa)) is a DNA-binding region (HMG box). Positions 625-634 (DKSKKKKKVK) are enriched in basic residues. Over residues 643 to 659 (PSRGSSSKSSSRQLSDS) the composition is skewed to low complexity. Position 657 is a phosphoserine; by CK2 (S657). Phosphoserine occurs at positions 659, 667, 668, 671, 672, and 673. At S688 the chain carries Phosphoserine; by CK2. The segment covering 695–708 (TPPSSEDSASGSDE) has biased composition (polar residues).

Belongs to the SSRP1 family. As to quaternary structure, interacts with MYOG (via C-terminal region). Component of the FACT complex, a stable heterodimer of SSRP1 and SUPT16H. Also a component of a CK2-SPT16-SSRP1 complex which forms following UV irradiation, composed of SSRP1, SUPT16H, CSNK2A1, CSNK2A2 and CSNK2B. Binds to histone H3-H4 tetramers, but not to intact nucleosomes. Identified in a centromere complex containing histones H2A, H2B and H4, and at least CENPA, CENPB, CENPC, CENPT, CENPN, HJURP, SUPT16H, SSRP1 and RSF1. Interacts with isoform gamma of TP63. Interacts with FYTTD1/UIF. Interacts with SRF. Interacts with NEK9. In terms of processing, phosphorylated by CK2 following UV but not gamma irradiation. Phosphorylation inhibits its DNA-binding activity. Ubiquitinated. Polyubiquitinated following caspase cleavage resulting in degradation of the N-terminal ubiquitinated part of the cleaved protein. Post-translationally, sumoylated.

It localises to the nucleus. The protein localises to the chromosome. Its subcellular location is the nucleolus. Component of the FACT complex, a general chromatin factor that acts to reorganize nucleosomes. The FACT complex is involved in multiple processes that require DNA as a template such as mRNA elongation, DNA replication and DNA repair. During transcription elongation the FACT complex acts as a histone chaperone that both destabilizes and restores nucleosomal structure. It facilitates the passage of RNA polymerase II and transcription by promoting the dissociation of one histone H2A-H2B dimer from the nucleosome, then subsequently promotes the reestablishment of the nucleosome following the passage of RNA polymerase II. The FACT complex is probably also involved in phosphorylation of 'Ser-392' of p53/TP53 via its association with CK2 (casein kinase II). Binds specifically to double-stranded DNA. Also acts as a transcriptional coactivator for p63/TP63. This is FACT complex subunit SSRP1 (Ssrp1) from Mus musculus (Mouse).